A 297-amino-acid chain; its full sequence is MLRLGSHVSMSGKKMLLGASEEAASYGSNTFMIYTGAPQNTRRKPIEELNIEAGLEHMKAHDMADIVVHAPYIINIGNSVKPETFELGVNFLQSEIERTRALGAKQIVLHPGAHVGEGADKGIKQIIQGLNEALIHDQDVQIALETMAGKGSECGRTFEEIAQIIDGVTHNELLSVTFDTCHTHDAGYDIVNDFDGVLNEFDKIIGVDRLKVLHINDSKNERGAHKDRHANIGFGHIGFDALHYIVHHPQLADVPKILETPYVGEDKASKKAPYKWEIAMLRNGEFDPDLLNKIQNS.

9 residues coordinate Zn(2+): His-69, His-110, Glu-145, Asp-179, His-182, His-214, Asp-227, His-229, and Glu-259.

This sequence belongs to the AP endonuclease 2 family. It depends on Zn(2+) as a cofactor.

It catalyses the reaction Endonucleolytic cleavage to 5'-phosphooligonucleotide end-products.. Endonuclease IV plays a role in DNA repair. It cleaves phosphodiester bonds at apurinic or apyrimidinic (AP) sites, generating a 3'-hydroxyl group and a 5'-terminal sugar phosphate. The polypeptide is Probable endonuclease 4 (Listeria monocytogenes serotype 4b (strain F2365)).